The sequence spans 142 residues: Large ribosomal subunit protein uL13 (142 aa).

This sequence belongs to the universal ribosomal protein uL13 family. As to quaternary structure, part of the 50S ribosomal subunit.

Functionally, this protein is one of the early assembly proteins of the 50S ribosomal subunit, although it is not seen to bind rRNA by itself. It is important during the early stages of 50S assembly. The chain is Large ribosomal subunit protein uL13 from Delftia acidovorans (strain DSM 14801 / SPH-1).